The sequence spans 255 residues: F-box/SPRY domain-containing protein 1 (255 aa).

Positions 3–51 (DPVAALCNYNVLEVIFSYLELDDLSHCSQVCKSWYHFLNDENSDVWRWH) constitute an F-box domain. The region spanning 61 to 253 (LKSDLLSSVP…VSMVYLGTPL (193 aa)) is the B30.2/SPRY domain.

It belongs to the FBXO45/Fsn family. In terms of assembly, component of an E3 ubiquitin ligase complex composed of hiw and Fsn.

The protein localises to the synapse. The protein operates within protein modification; protein ubiquitination. Functionally, required in the presynaptic motoneuron to down-regulate the levels of wnd and restrain synaptic terminal growth at the neuromuscular junction (NMJ). This chain is F-box/SPRY domain-containing protein 1, found in Drosophila sechellia (Fruit fly).